We begin with the raw amino-acid sequence, 872 residues long: Protein translocase subunit SecA (872 aa).

ATP-binding positions include Gln-87, 105-109, and Asp-500; that span reads GEGKT. 4 residues coordinate Zn(2+): Cys-855, Cys-857, Cys-866, and His-867.

This sequence belongs to the SecA family. Monomer and homodimer. Part of the essential Sec protein translocation apparatus which comprises SecA, SecYEG and auxiliary proteins SecDF-YajC and YidC. Requires Zn(2+) as cofactor.

It is found in the cell inner membrane. The protein resides in the cytoplasm. It carries out the reaction ATP + H2O + cellular proteinSide 1 = ADP + phosphate + cellular proteinSide 2.. Its function is as follows. Part of the Sec protein translocase complex. Interacts with the SecYEG preprotein conducting channel. Has a central role in coupling the hydrolysis of ATP to the transfer of proteins into and across the cell membrane, serving both as a receptor for the preprotein-SecB complex and as an ATP-driven molecular motor driving the stepwise translocation of polypeptide chains across the membrane. The sequence is that of Protein translocase subunit SecA from Anaplasma marginale (strain St. Maries).